The primary structure comprises 332 residues: tRNA-dihydrouridine(20/20a) synthase (332 aa).

FMN contacts are provided by residues 19-21 (PML) and Gln71. Cys101 acts as the Proton donor in catalysis. Residues Lys140, His173, 213–215 (NGG), and 235–236 (GR) each bind FMN.

This sequence belongs to the Dus family. DusA subfamily. It depends on FMN as a cofactor.

The enzyme catalyses 5,6-dihydrouridine(20) in tRNA + NADP(+) = uridine(20) in tRNA + NADPH + H(+). The catalysed reaction is 5,6-dihydrouridine(20) in tRNA + NAD(+) = uridine(20) in tRNA + NADH + H(+). It carries out the reaction 5,6-dihydrouridine(20a) in tRNA + NADP(+) = uridine(20a) in tRNA + NADPH + H(+). It catalyses the reaction 5,6-dihydrouridine(20a) in tRNA + NAD(+) = uridine(20a) in tRNA + NADH + H(+). Its function is as follows. Catalyzes the synthesis of 5,6-dihydrouridine (D), a modified base found in the D-loop of most tRNAs, via the reduction of the C5-C6 double bond in target uridines. Specifically modifies U20 and U20a in tRNAs. This Salmonella typhimurium (strain LT2 / SGSC1412 / ATCC 700720) protein is tRNA-dihydrouridine(20/20a) synthase.